A 380-amino-acid chain; its full sequence is Cytochrome b (380 aa).

The next 4 membrane-spanning stretches (helical) occupy residues 34 to 54 (FGSLLGICLTTQILTGLLLAA), 78 to 99 (WLIRNLHANGASFFFICIYMHV), 114 to 134 (WNTGVILLLTLMATAFVGYVL), and 179 to 199 (FFTLHFLLPFMIMGLTLIHLT). Residues His84 and His98 each coordinate heme b. Heme b is bound by residues His183 and His197. His202 contacts a ubiquinone. Helical transmembrane passes span 227 to 247 (LKDILGFMLMFLPLMTLALFS), 289 to 309 (LGGVLALAASMLVLFLAPLLH), 321 to 341 (LSQLLFWTLTANLLILTWVGS), and 348 to 368 (FMIIGQLASLTYFTILLILFP).

This sequence belongs to the cytochrome b family. In terms of assembly, the cytochrome bc1 complex contains 11 subunits: 3 respiratory subunits (MT-CYB, CYC1 and UQCRFS1), 2 core proteins (UQCRC1 and UQCRC2) and 6 low-molecular weight proteins (UQCRH/QCR6, UQCRB/QCR7, UQCRQ/QCR8, UQCR10/QCR9, UQCR11/QCR10 and a cleavage product of UQCRFS1). This cytochrome bc1 complex then forms a dimer. Heme b serves as cofactor.

It is found in the mitochondrion inner membrane. In terms of biological role, component of the ubiquinol-cytochrome c reductase complex (complex III or cytochrome b-c1 complex) that is part of the mitochondrial respiratory chain. The b-c1 complex mediates electron transfer from ubiquinol to cytochrome c. Contributes to the generation of a proton gradient across the mitochondrial membrane that is then used for ATP synthesis. The protein is Cytochrome b (MT-CYB) of Balearica pavonina (Black crowned-crane).